The following is a 379-amino-acid chain: ATP-sensitive inward rectifier potassium channel 10 (379 aa).

The Cytoplasmic segment spans residues 1 to 61 (MTSVAKVYYS…LKDLWTTFID (61 aa)). Position 36 (R36) interacts with 1,2-dioctanoyl-sn-glycero-3-phospho-(1D-myo-inositol-4,5-bisphosphate). The helical transmembrane segment at 62 to 88 (MQWRYKLLLFSATFAGTWFLFGVVWYL) threads the bilayer. Topologically, residues 89–114 (VAVAHGDLLELGPPANHTPCVVQVHT) are extracellular. A disulfide bond links C108 and C140. The segment at residues 115-131 (LTGAFLFSLESQTTIGY) is an intramembrane region (discontinuously helical; Pore-forming). The Selectivity filter signature appears at 128-133 (TIGYGF). The Extracellular segment spans residues 132-140 (GFRYISEEC). Residues 141–166 (PLAIVLLIAQLVLTTILEIFITGTFL) form a helical membrane-spanning segment. Over 167–379 (AKIARPKKRA…SALSVRISNV (213 aa)) the chain is Cytoplasmic. Residues K168, R171, and K173 each contribute to the 1,2-dioctanoyl-sn-glycero-3-phospho-(1D-myo-inositol-4,5-bisphosphate) site. Residue 210–217 (GCQVTGKL) coordinates ATP.

Belongs to the inward rectifier-type potassium channel (TC 1.A.2.1) family. KCNJ10 subfamily. In terms of assembly, homotetramer. In kidney cells, it forms heteromeric channels with Kir5.1/KCNJ16; this interaction is required for KCNJ16 localization to the basolateral membrane. Interacts with MAGI1, alone and possibly as a heteromer with KCNJ16; this interaction may facilitate KCNJ10/KCNJ16 potassium channel expression at the basolateral membrane in kidney cells. Interacts with PATJ. Predominantly expressed in the brain, including in glial cells of the cerebellum and forebrain. Expressed at lower levels in the kidney, and other peripheral tissues.

The protein localises to the membrane. It localises to the basolateral cell membrane. It carries out the reaction K(+)(in) = K(+)(out). With respect to regulation, channel activity is strongly regulated by variations of cytosolic pH; channels are activated by alkaline and inhibited by acidic pH values. Activated by phosphatidylinositol 4,5 biphosphate (PtdIns(4,5)P2). Inhibited by Ba(2+) and Cs(+). May be responsible for potassium buffering action of glial cells in the brain. Inward rectifier potassium channels are characterized by a greater tendency to allow potassium to flow into the cell rather than out of it. Their voltage dependence is regulated by the concentration of extracellular potassium; as external potassium is raised, the voltage range of the channel opening shifts to more positive voltages. The inward rectification is mainly due to the blockage of outward current by internal magnesium. Can be blocked by extracellular barium and cesium. In the kidney, together with KCNJ16, mediates basolateral K(+) recycling in distal tubules; this process is critical for Na(+) reabsorption at the tubules. The chain is ATP-sensitive inward rectifier potassium channel 10 from Rattus norvegicus (Rat).